The sequence spans 301 residues: Tyrosine recombinase XerC (301 aa).

The region spanning 1–85 is the Core-binding (CB) domain; the sequence is MELISLFKQY…ALRSFYRFLV (85 aa). The Tyr recombinase domain maps to 106–292; sequence KLPHFFYEKE…TKEKLQESYR (187 aa). Residues Arg147, Lys171, His244, Arg247, and His270 contribute to the active site. Tyr279 serves as the catalytic O-(3'-phospho-DNA)-tyrosine intermediate.

The protein belongs to the 'phage' integrase family. XerC subfamily. Forms a cyclic heterotetrameric complex composed of two molecules of XerC and two molecules of XerD.

Its subcellular location is the cytoplasm. In terms of biological role, site-specific tyrosine recombinase, which acts by catalyzing the cutting and rejoining of the recombining DNA molecules. The XerC-XerD complex is essential to convert dimers of the bacterial chromosome into monomers to permit their segregation at cell division. It also contributes to the segregational stability of plasmids. This is Tyrosine recombinase XerC from Pediococcus pentosaceus (strain ATCC 25745 / CCUG 21536 / LMG 10740 / 183-1w).